Consider the following 69-residue polypeptide: MAQELSEKELLKMEVEQLKKEVKNPRALISKTGKEIKDYVEAEAGNDPLLKGIPEDKNPFKEKGGCMIS.

Positions 47-69 (DPLLKGIPEDKNPFKEKGGCMIS) are disordered. The span at 53 to 69 (IPEDKNPFKEKGGCMIS) shows a compositional bias: basic and acidic residues. C66 is modified (cysteine methyl ester). A lipid anchor (S-farnesyl cysteine) is attached at C66. A propeptide spans 67-69 (MIS) (removed in mature form).

The protein belongs to the G protein gamma family. As to quaternary structure, g proteins are composed of 3 units, alpha, beta and gamma.

It localises to the cell membrane. Its function is as follows. Guanine nucleotide-binding proteins (G proteins) are involved as a modulator or transducer in various transmembrane signaling systems. The beta and gamma chains are required for the GTPase activity, for replacement of GDP by GTP, and for G protein-effector interaction. The chain is Guanine nucleotide-binding protein G(I)/G(S)/G(O) subunit gamma-T2 (GNGT2) from Canis lupus familiaris (Dog).